Reading from the N-terminus, the 355-residue chain is Guanine nucleotide-binding protein G(i) subunit alpha (355 aa).

Residue Gly2 is the site of N-myristoyl glycine attachment. Cys3 is lipidated: S-palmitoyl cysteine. A G-alpha domain is found at 33–355; sequence REVKLLLLGA…KNNLKDCGLF (323 aa). The segment at 36–49 is G1 motif; the sequence is KLLLLGAGESGKST. GTP contacts are provided by residues 41–48, 176–182, 201–205, 270–273, and Ala327; these read GAGESGKS, LRTRVKT, DVGGQ, and NKKD. The Mg(2+) site is built by Ser48 and Thr182. The interval 174 to 182 is G2 motif; it reads DVLRTRVKT. Positions 197–206 are G3 motif; sequence FKLFDVGGQR. The G4 motif stretch occupies residues 266-273; it reads ILFLNKKD. The G5 motif stretch occupies residues 325 to 330; the sequence is TCATDT.

This sequence belongs to the G-alpha family. G(i/o/t/z) subfamily. In terms of assembly, g proteins are composed of 3 units; alpha, beta and gamma. The alpha chain contains the guanine nucleotide binding site.

In terms of biological role, guanine nucleotide-binding proteins (G proteins) are involved as modulators or transducers in various transmembrane signaling systems. The chain is Guanine nucleotide-binding protein G(i) subunit alpha from Homarus americanus (American lobster).